The primary structure comprises 475 residues: MSILFSSILFSIATFFSRILGLFRDVLFAKYFGVSYELDAYFIAIMFPFFLRKVFGEGAMSSAFVPLYSEKSGEEKDKFLSSVINGFSLIILALVILSYFFPELIINLFGAGSSHETKILAKKLLLITSPSIYFIFLWAISYSILNTNNKFFWPALTPSISNITIIIGTFLSTKYGIISPTIGFLIGSILMFFSIIKSIIKHKYYFTIKHFPHFLKLFFPTFMTMVVSQINTVVDMNVVSFYDKGSISYLQYASRFYLLPYGLFAVSVSTVVLSKISNDRKNFNYHLNDALKTTLFFTIPSMVGLIFLSTPIIRFFYEHGAFTSKDTLITSKILIAYTLGLPFYGIYSTISRSYHAIKNTKTPFIAATIVSLSNIILDIIFGLKYGPIGVALATSIAGIIGVLYLLFSVKTFPIKDFLKISLNSLIMLFVIYLTDFTDNEFWFLIQILIGILVYLIFSSIFYRDLIRRFLYARKK.

Residues 1-2 (MS) lie on the Cytoplasmic side of the membrane. A helical membrane pass occupies residues 3–23 (ILFSSILFSIATFFSRILGLF). Over 24 to 35 (RDVLFAKYFGVS) the chain is Periplasmic. The chain crosses the membrane as a helical span at residues 36–56 (YELDAYFIAIMFPFFLRKVFG). The Cytoplasmic segment spans residues 57–78 (EGAMSSAFVPLYSEKSGEEKDK). The helical transmembrane segment at 79–99 (FLSSVINGFSLIILALVILSY) threads the bilayer. Topologically, residues 100 to 123 (FFPELIINLFGAGSSHETKILAKK) are periplasmic. Residues 124–144 (LLLITSPSIYFIFLWAISYSI) traverse the membrane as a helical segment. Over 145-150 (LNTNNK) the chain is Cytoplasmic. The chain crosses the membrane as a helical span at residues 151 to 171 (FFWPALTPSISNITIIIGTFL). Residues 172–175 (STKY) lie on the Periplasmic side of the membrane. A helical membrane pass occupies residues 176–196 (GIISPTIGFLIGSILMFFSII). The Cytoplasmic portion of the chain corresponds to 197-213 (KSIIKHKYYFTIKHFPH). A helical membrane pass occupies residues 214–238 (FLKLFFPTFMTMVVSQINTVVDMNV). Residues 239–249 (VSFYDKGSISY) are Periplasmic-facing. A helical membrane pass occupies residues 250–271 (LQYASRFYLLPYGLFAVSVSTV). Residues 272-287 (VLSKISNDRKNFNYHL) lie on the Cytoplasmic side of the membrane. A helical membrane pass occupies residues 288–308 (NDALKTTLFFTIPSMVGLIFL). Residues 309–332 (STPIIRFFYEHGAFTSKDTLITSK) are Periplasmic-facing. Residues 333–353 (ILIAYTLGLPFYGIYSTISRS) traverse the membrane as a helical segment. Over 354–362 (YHAIKNTKT) the chain is Cytoplasmic. A helical transmembrane segment spans residues 363 to 383 (PFIAATIVSLSNIILDIIFGL). The Periplasmic portion of the chain corresponds to 384–386 (KYG). Residues 387 to 407 (PIGVALATSIAGIIGVLYLLF) traverse the membrane as a helical segment. Residues 408–416 (SVKTFPIKD) are Cytoplasmic-facing. The chain crosses the membrane as a helical span at residues 417–437 (FLKISLNSLIMLFVIYLTDFT). Over 438–440 (DNE) the chain is Periplasmic. A helical transmembrane segment spans residues 441 to 461 (FWFLIQILIGILVYLIFSSIF). The Cytoplasmic portion of the chain corresponds to 462 to 475 (YRDLIRRFLYARKK).

The protein belongs to the MurJ/MviN family.

It localises to the cell inner membrane. It participates in cell wall biogenesis; peptidoglycan biosynthesis. Functionally, involved in peptidoglycan biosynthesis. Transports lipid-linked peptidoglycan precursors from the inner to the outer leaflet of the cytoplasmic membrane. This Thermosipho africanus (strain TCF52B) protein is Lipid II flippase MurJ.